A 47-amino-acid chain; its full sequence is Fasciclin-like arabinogalactan protein (47 aa).

Residues 1–47 form the FAS1 domain; it reads APTPATLNGLTIFAPNDEAFKATGVPDLSKLSNAPMVSLLQYHAAAR.

It belongs to the fasciclin-like AGP family.

Its function is as follows. May be a cell surface adhesion protein. The protein is Fasciclin-like arabinogalactan protein of Jatropha curcas (Barbados nut).